We begin with the raw amino-acid sequence, 333 residues long: L-lactate dehydrogenase B chain (333 aa).

NAD(+) is bound by residues 29-57 and Arg-99; that span reads GQVG…LEDK. Positions 106, 138, and 169 each coordinate substrate. Asn-138 serves as a coordination point for NAD(+). Catalysis depends on His-193, which acts as the Proton acceptor. Residue Thr-248 coordinates substrate.

This sequence belongs to the LDH/MDH superfamily. LDH family. As to quaternary structure, homotetramer.

The protein localises to the cytoplasm. The catalysed reaction is (S)-lactate + NAD(+) = pyruvate + NADH + H(+). It functions in the pathway fermentation; pyruvate fermentation to lactate; (S)-lactate from pyruvate: step 1/1. Its function is as follows. Interconverts simultaneously and stereospecifically pyruvate and lactate with concomitant interconversion of NADH and NAD(+). The protein is L-lactate dehydrogenase B chain (LDHB) of Sceloporus woodi (Florida scrub lizard).